The following is a 91-amino-acid chain: Large ribosomal subunit protein uL23c (91 aa).

This sequence belongs to the universal ribosomal protein uL23 family. Part of the 50S ribosomal subunit.

Its subcellular location is the plastid. The protein localises to the chloroplast. Functionally, binds to 23S rRNA. This chain is Large ribosomal subunit protein uL23c (rpl23), found in Pinus thunbergii (Japanese black pine).